Reading from the N-terminus, the 46-residue chain is Antimicrobial peptide eNAP-1 (46 aa).

Cystine bridges form between cysteine 4–cysteine 16 and cysteine 10–cysteine 26.

This sequence belongs to the granulin family.

The protein localises to the secreted. Has antimicrobial activity against Gram-negative and Gram-positive bacteria. The sequence is that of Antimicrobial peptide eNAP-1 from Equus caballus (Horse).